Reading from the N-terminus, the 187-residue chain is Pseudo histidine-containing phosphotransfer protein 1 (187 aa).

One can recognise an HPt domain in the interval Ser74–Tyr169.

Its function is as follows. Functions as a two-component phosphorelay mediator between cytokinin sensor histidine kinases and response regulators (B-type ARRs). Plays an important role in propagating cytokinin signal transduction. In Oryza sativa subsp. japonica (Rice), this protein is Pseudo histidine-containing phosphotransfer protein 1.